Reading from the N-terminus, the 414-residue chain is MATQRASGLLQRLAQGSLVKQILVGLVLGILLAWISKPAAEAVGLLGTLFVGALKAVAPVLVLMLVMASIANHQHGQKTNIRPILFLYLLGTFSAALAAVVFSFAFPSTLHLSSSAQDIVPPSGIVEVLRGLLMSMVSNPIDALLNANYIGILVWAVGLGFALRHGNETTKNLVNDMSNAVTFMVKLVIRFAPVGIFGLVSSTLATTGFSTLWGYAHLLVVLIGCMLLVALVVNPLLVFWKIRRNPYPLVFACLRESGVYAFFTRSSAANIPVNMALCEKLNLDRDTYSVSIPLGATINMAGAAITITVLTLAAVHTLGVPVDLPTALLLSVVASLCACGASGVAGGSLLLIPLACNMFGIPNDIAMQVVAVGFIIGVLQDSCETALNSSTDVLFTAAACQAEDERLANNALRS.

The next 8 helical transmembrane spans lie at glycine 16–serine 36, leucine 46–valine 66, isoleucine 84–phenylalanine 104, alanine 143–leucine 163, alanine 180–valine 200, leucine 219–phenylalanine 239, methionine 300–valine 320, and valine 332–isoleucine 352.

The protein belongs to the dicarboxylate/amino acid:cation symporter (DAACS) (TC 2.A.23) family.

The protein localises to the cell inner membrane. It catalyses the reaction L-serine(in) + Na(+)(in) = L-serine(out) + Na(+)(out). The catalysed reaction is L-threonine(in) + Na(+)(in) = L-threonine(out) + Na(+)(out). Functionally, involved in the import of serine and threonine into the cell, with the concomitant import of sodium (symport system). In Salmonella newport (strain SL254), this protein is Serine/threonine transporter SstT.